The sequence spans 303 residues: Glycine--tRNA ligase alpha subunit (303 aa).

It belongs to the class-II aminoacyl-tRNA synthetase family. As to quaternary structure, tetramer of two alpha and two beta subunits.

The protein resides in the cytoplasm. It catalyses the reaction tRNA(Gly) + glycine + ATP = glycyl-tRNA(Gly) + AMP + diphosphate. The sequence is that of Glycine--tRNA ligase alpha subunit from Klebsiella pneumoniae (strain 342).